A 100-amino-acid chain; its full sequence is Small ribosomal subunit protein uS14c (100 aa).

The protein belongs to the universal ribosomal protein uS14 family. In terms of assembly, part of the 30S ribosomal subunit.

The protein localises to the plastid. Its subcellular location is the chloroplast. In terms of biological role, binds 16S rRNA, required for the assembly of 30S particles. This chain is Small ribosomal subunit protein uS14c, found in Coffea arabica (Arabian coffee).